Here is a 422-residue protein sequence, read N- to C-terminus: Serine hydroxymethyltransferase (422 aa).

Residues Leu-118 and Gly-122–Leu-124 each bind (6S)-5,6,7,8-tetrahydrofolate. Residue Lys-227 is modified to N6-(pyridoxal phosphate)lysine. Residue Glu-242 coordinates (6S)-5,6,7,8-tetrahydrofolate.

Belongs to the SHMT family. In terms of assembly, homodimer. Requires pyridoxal 5'-phosphate as cofactor.

The protein localises to the cytoplasm. It carries out the reaction (6R)-5,10-methylene-5,6,7,8-tetrahydrofolate + glycine + H2O = (6S)-5,6,7,8-tetrahydrofolate + L-serine. The protein operates within one-carbon metabolism; tetrahydrofolate interconversion. It functions in the pathway amino-acid biosynthesis; glycine biosynthesis; glycine from L-serine: step 1/1. In terms of biological role, catalyzes the reversible interconversion of serine and glycine with tetrahydrofolate (THF) serving as the one-carbon carrier. This reaction serves as the major source of one-carbon groups required for the biosynthesis of purines, thymidylate, methionine, and other important biomolecules. Also exhibits THF-independent aldolase activity toward beta-hydroxyamino acids, producing glycine and aldehydes, via a retro-aldol mechanism. The sequence is that of Serine hydroxymethyltransferase from Sulfurihydrogenibium sp. (strain YO3AOP1).